The chain runs to 106 residues: SDO1-like protein C21C3.19 (106 aa).

This sequence belongs to the SDO1-like family.

It is found in the cytoplasm. The protein localises to the nucleus. May play a role in RNA metabolism. The chain is SDO1-like protein C21C3.19 from Schizosaccharomyces pombe (strain 972 / ATCC 24843) (Fission yeast).